An 836-amino-acid chain; its full sequence is Protein O-mannosyl-transferase TMTC2 (836 aa).

The chain crosses the membrane as a helical span at residues 1–21 (MIAELVSSALGLALYLNTLSA). The Extracellular portion of the chain corresponds to 22 to 77 (DFCYDDSRAIKTNQDLLPETPWTHIFYNDFWGTLLTHSGSHKSYRPLCTLSFRLNH). The chain crosses the membrane as a helical span at residues 78-98 (AIGGLNPWSYHLVNVLLHAAV). The Cytoplasmic portion of the chain corresponds to 99–107 (TGLFTRFSK). The helical transmembrane segment at 108-128 (ALLGDGYWTFMAGLMFASHPI) threads the bilayer. The Extracellular portion of the chain corresponds to 129-132 (HTEA). The chain crosses the membrane as a helical span at residues 133-153 (VAGIVGRADVGASLFFLLSLL). At 154-168 (CYIKHCSTRGYSART) the chain is on the cytoplasmic side. The next 2 membrane-spanning stretches (helical) occupy residues 169–184 (WGWF…CSML) and 185–204 (WKEQ…VFVF). Topologically, residues 205 to 220 (HRLKMKQILPTIYKRK) are cytoplasmic. Residues 221-241 (NLSLFLSISLLTFWGTCLLGA) form a helical membrane-spanning segment. Topologically, residues 242-312 (RLYWMGNKPP…KTVCDWRNLH (71 aa)) are extracellular. The chain crosses the membrane as a helical span at residues 313-333 (TVAFYSGLLLLAYCGLKNPSL). The Cytoplasmic portion of the chain corresponds to 334-392 (EGECNGKALTNGKQNANGHSCHSDVEYRNSEMKPSFASKVENGIKNCVPQRTQLPSTEN). The helical transmembrane segment at 393 to 415 (IVILSLSLLIIPFIPATNLFFYV) threads the bilayer. Residues 416-422 (GFVIAER) lie on the Extracellular side of the membrane. A helical transmembrane segment spans residues 423-443 (VLYIPSMGFCLLITVGARALY). The Cytoplasmic portion of the chain corresponds to 444 to 449 (VKVQKR). The chain crosses the membrane as a helical span at residues 450–470 (FLKSLVFYATATLIVFYGVKT). Residues 471 to 836 (AIRNGDWQNE…EKQGLKTSKT (366 aa)) lie on the Extracellular side of the membrane. 9 TPR repeats span residues 493–526 (AKAW…RSNM), 527–560 (ADML…RPTL), 561–594 (ASAY…PDEN), 606–639 (TSCL…MPRH), 643–676 (QSLY…KTDH), 677–710 (IPAH…DPTK), 711–744 (GNCY…DNTE), 745–778 (FDVV…RPNY), and 779–812 (PAAL…KPDD).

Belongs to the TMTC family.

The protein resides in the membrane. The protein localises to the endoplasmic reticulum. The catalysed reaction is a di-trans,poly-cis-dolichyl beta-D-mannosyl phosphate + L-seryl-[protein] = 3-O-(alpha-D-mannosyl)-L-seryl-[protein] + a di-trans,poly-cis-dolichyl phosphate + H(+). It catalyses the reaction a di-trans,poly-cis-dolichyl beta-D-mannosyl phosphate + L-threonyl-[protein] = 3-O-(alpha-D-mannosyl)-L-threonyl-[protein] + a di-trans,poly-cis-dolichyl phosphate + H(+). It functions in the pathway protein modification; protein glycosylation. Transfers mannosyl residues to the hydroxyl group of serine or threonine residues. The 4 members of the TMTC family are O-mannosyl-transferases dedicated primarily to the cadherin superfamily, each member seems to have a distinct role in decorating the cadherin domains with O-linked mannose glycans at specific regions. Also acts as O-mannosyl-transferase on other proteins such as PDIA3. The sequence is that of Protein O-mannosyl-transferase TMTC2 from Mus musculus (Mouse).